A 94-amino-acid chain; its full sequence is Co-chaperonin GroES (94 aa).

The protein belongs to the GroES chaperonin family. Heptamer of 7 subunits arranged in a ring. Interacts with the chaperonin GroEL.

It is found in the cytoplasm. Functionally, together with the chaperonin GroEL, plays an essential role in assisting protein folding. The GroEL-GroES system forms a nano-cage that allows encapsulation of the non-native substrate proteins and provides a physical environment optimized to promote and accelerate protein folding. GroES binds to the apical surface of the GroEL ring, thereby capping the opening of the GroEL channel. In Staphylococcus aureus (strain Mu50 / ATCC 700699), this protein is Co-chaperonin GroES.